A 900-amino-acid polypeptide reads, in one-letter code: Translation initiation factor IF-2 (900 aa).

A disordered region spans residues 48–310; it reads HLNRDRGNAP…KPSSLQQSFN (263 aa). Positions 68 to 82 are enriched in polar residues; it reads STLNVPSTGGKSKSV. 2 stretches are compositionally biased toward basic and acidic residues: residues 85–98 and 108–164; these read EVRK…RDPI and QARR…KEKV. Polar residues predominate over residues 165 to 176; that stretch reads TNQQNENMTKPA. A compositionally biased stretch (basic and acidic residues) spans 177-237; sequence QSEKAKREAE…SATKPEESAD (61 aa). Residues 263–277 are compositionally biased toward basic residues; the sequence is TRTRAAKVTKQKKGN. The span at 278–291 shows a compositional bias: basic and acidic residues; sequence RQSESKADREEARA. The region spanning 399–568 is the tr-type G domain; it reads FRAPVVTIMG…LLQAEVLELK (170 aa). A G1 region spans residues 408–415; that stretch reads GHVDHGKT. Residue 408 to 415 participates in GTP binding; the sequence is GHVDHGKT. The interval 433 to 437 is G2; sequence GITQH. Residues 454 to 457 form a G3 region; that stretch reads DTPG. GTP contacts are provided by residues 454-458 and 508-511; these read DTPGH and NKID. The tract at residues 508–511 is G4; that stretch reads NKID. The G5 stretch occupies residues 544-546; the sequence is SAK.

It belongs to the TRAFAC class translation factor GTPase superfamily. Classic translation factor GTPase family. IF-2 subfamily.

Its subcellular location is the cytoplasm. Its function is as follows. One of the essential components for the initiation of protein synthesis. Protects formylmethionyl-tRNA from spontaneous hydrolysis and promotes its binding to the 30S ribosomal subunits. Also involved in the hydrolysis of GTP during the formation of the 70S ribosomal complex. This chain is Translation initiation factor IF-2, found in Pectobacterium atrosepticum (strain SCRI 1043 / ATCC BAA-672) (Erwinia carotovora subsp. atroseptica).